The chain runs to 72 residues: MSKVCVLTGKRPKYGNNVSHANNHTRTRFEPNLHTKRIWIEEEKCWVKVKLSAKAMKIISKTGTAKLAALLK.

Belongs to the bacterial ribosomal protein bL28 family.

The polypeptide is Large ribosomal subunit protein bL28 (Chlorobium limicola (strain DSM 245 / NBRC 103803 / 6330)).